The chain runs to 174 residues: Ribosome maturation factor RimM (174 aa).

A PRC barrel domain is found at 97-169 (GNKFYFHEVI…KVVMDLPEGL (73 aa)).

It belongs to the RimM family. As to quaternary structure, binds ribosomal protein uS19.

Its subcellular location is the cytoplasm. In terms of biological role, an accessory protein needed during the final step in the assembly of 30S ribosomal subunit, possibly for assembly of the head region. Essential for efficient processing of 16S rRNA. May be needed both before and after RbfA during the maturation of 16S rRNA. It has affinity for free ribosomal 30S subunits but not for 70S ribosomes. The protein is Ribosome maturation factor RimM of Flavobacterium psychrophilum (strain ATCC 49511 / DSM 21280 / CIP 103535 / JIP02/86).